The sequence spans 605 residues: Ras guanine nucleotide exchange factor A (605 aa).

The LisH domain maps to 67–99 (DKTAIIQLILQHLSTKGLKQTKQTLEKEARTTT). Positions 198 to 320 (DDEVVKFASL…SLTKMVEKLS (123 aa)) constitute an N-terminal Ras-GEF domain. A Ras-GEF domain is found at 353-597 (DEEEIARQLT…YRESLKREPK (245 aa)).

Component of the Sca1 complex composed of at least gefA, gefH, scaA, phr, and the protein phosphatase 2A subunits pppA and pho2B. Interacts directly with gefH.

Its subcellular location is the cell membrane. Functionally, ras-bound GDP/GTP exchange factor required for normal activation of adenylyl cyclase. Component of the Sca1 complex, a regulator of cell motility, chemotaxis and signal relay. The Sca1 complex is recruited to the plasma membrane in a chemoattractant- and F-actin-dependent manner and is enriched at the leading edge of chemotaxing cells where it regulates F-actin dynamics and signal relay by controlling the activation of rasC and the downstream target of rapamycin complex 2 (TORC2)-Akt/protein kinase B (PKB) pathway. This is Ras guanine nucleotide exchange factor A (gefA) from Dictyostelium discoideum (Social amoeba).